We begin with the raw amino-acid sequence, 493 residues long: Cytochrome P450 monooxygenase astA (493 aa).

A helical membrane pass occupies residues 5–25; that stretch reads EIILLGLAALAVTYQVIVWIY. Residues Asn-174 and Asn-286 are each glycosylated (N-linked (GlcNAc...) asparagine). Cys-433 is a binding site for heme.

Belongs to the cytochrome P450 family. Requires heme as cofactor.

The protein resides in the membrane. It catalyses the reaction asperterpenoid A + reduced [NADPH--hemoprotein reductase] + O2 = asperterpenoid C + oxidized [NADPH--hemoprotein reductase] + H2O + H(+). Its pathway is secondary metabolite biosynthesis; terpenoid biosynthesis. Cytochrome P450 monooxygenase; part of the gene cluster that mediates the biosynthesis of the asperterpenoids, sesterterpenes that exhibit anti-tuberculosis activity. The first step of the pathway is performed by the sesterterpene synthase astC that possesses both prenyl transferase and terpene cyclase activity, converting isopentenyl diphosphate and dimethylallyl diphosphate into geranylfarnesyl diphosphate (GFPP) and further converting GFPP into preasperterpenoid A, respectively. The cytochrome P450 monooxygenase astB then dually oxidizes preasperterpenoid A to produce asperterpenoid A along with a minor product, asperterpenoid B. Finally, the cytochrome P450 monooxygenase astA converts asperterpenoid A into asperterpenoid C. The chain is Cytochrome P450 monooxygenase astA from Talaromyces wortmannii (Penicillium wortmannii).